The primary structure comprises 687 residues: Protein-glutamine gamma-glutamyltransferase 2 (687 aa).

Position 2 is an N-acetylalanine (Ala2). Intrachain disulfides connect Cys230/Cys370 and Cys370/Cys371. Residues Cys277, His335, and Asp358 contribute to the active site. Ca(2+)-binding residues include Asn398, Asp400, Glu437, Glu447, and Glu452. Lys468 carries the N6-acetyllysine modification. Arg476 to Met483 contributes to the GTP binding site. Ca(2+) is bound at residue Glu539. Arg580 to Tyr583 lines the GTP pocket. Gln633 is covalently cross-linked (Isoglutamyl lysine isopeptide (Gln-Lys) (interchain with K-?)).

The protein belongs to the transglutaminase superfamily. Transglutaminase family. In terms of assembly, monomer. Interacts with phospholipase C; promoting alpha-1 adrenergic receptor signaling. Interacts with PLCD1. Requires Ca(2+) as cofactor. Disulfide bond formation inactivates the calcium-dependent acyltransferase activity. Cys-370 can form disulfide bonds with both Cys-230 and Cys-371: formation of a disulfide bond between Cys-230 and Cys-370 facilitates formation of the disulfide between Cys-370 and Cys-371, which promotes inactivation of the acyltransferase activity. May also form interchain disulfids between Cys-230 and Cys-370. Ca(2+) protects against disulfide bond formation and inactivation. In terms of processing, auto-transglutaminated: Forms covalent cross-links mediated by transglutaminase between Gln-633 and the epsilon-amino group of a lysine residue of itself or HMGB1, forming homopolymers and heteropolymers, respectively. Post-translationally, S-nitrosylated, leading to inactivation of the acyltransferase activity. As to expression, highest levels are detected in the lung. Lower levels are found in the liver, spleen and heart, but not in the brain.

The protein localises to the cytoplasm. It is found in the cytosol. Its subcellular location is the nucleus. It localises to the chromosome. The protein resides in the secreted. The protein localises to the extracellular space. It is found in the extracellular matrix. Its subcellular location is the cell membrane. It localises to the mitochondrion. The catalysed reaction is L-glutaminyl-[protein] + L-lysyl-[protein] = [protein]-L-lysyl-N(6)-5-L-glutamyl-[protein] + NH4(+). The enzyme catalyses L-glutaminyl-[protein] + serotonin = 5-serotonyl-L-glutamyl-[protein] + NH4(+). It carries out the reaction L-glutaminyl-[protein] + dopamine = 5-dopaminyl-L-glutamyl-[protein] + NH4(+). It catalyses the reaction L-glutaminyl-[protein] + histamine = 5-histaminyl-L-glutamyl-[protein] + NH4(+). The catalysed reaction is L-glutaminyl-[protein] + (R)-noradrenaline = 5-(R)-noradrenalinyl-L-glutamyl-[protein] + NH4(+). The enzyme catalyses L-glutaminyl-[protein] + H2O = L-glutamyl-[protein] + NH4(+). Its activity is regulated as follows. Acyltransferase activity is regulated by the binding of GTP and Ca(2+): inactivated by GTP, which stabilizes its closed structure, thereby obstructing the accessibility of substrates to the active sites. In contrast, Ca(2+) acts as a cofactor by inducing conformational change to the active open form. In absence of Ca(2+), Mg(2+) may bind Ca(2+)-binding sites, promoting GTP-binding and subsequent inhibition of the acyltransferase activity. Extracellularly reduced and activated by CLIC3. Its function is as follows. Calcium-dependent acyltransferase that catalyzes the formation of covalent bonds between peptide-bound glutamine and various primary amines, such as gamma-amino group of peptide-bound lysine, or mono- and polyamines, thereby producing cross-linked or aminated proteins, respectively. Involved in many biological processes, such as bone development, angiogenesis, wound healing, cellular differentiation, chromatin modification and apoptosis. Acts as a protein-glutamine gamma-glutamyltransferase by mediating the cross-linking of proteins, such as ACO2, HSPB6, FN1, HMGB1, RAP1GDS1, SLC25A4/ANT1, SPP1 and WDR54. Under physiological conditions, the protein cross-linking activity is inhibited by GTP; inhibition is relieved by Ca(2+) in response to various stresses. When secreted, catalyzes cross-linking of proteins of the extracellular matrix, such as FN1 and SPP1 resulting in the formation of scaffolds. Plays a key role during apoptosis, both by (1) promoting the cross-linking of cytoskeletal proteins resulting in condensation of the cytoplasm, and by (2) mediating cross-linking proteins of the extracellular matrix, resulting in the irreversible formation of scaffolds that stabilize the integrity of the dying cells before their clearance by phagocytosis, thereby preventing the leakage of harmful intracellular components. In addition to protein cross-linking, can use different monoamine substrates to catalyze a vast array of protein post-translational modifications: mediates aminylation of serotonin, dopamine, noradrenaline or histamine into glutamine residues of target proteins to generate protein serotonylation, dopaminylation, noradrenalinylation or histaminylation, respectively. Mediates protein serotonylation of small GTPases during activation and aggregation of platelets, leading to constitutive activation of these GTPases. Plays a key role in chromatin organization by mediating serotonylation and dopaminylation of histone H3. Catalyzes serotonylation of 'Gln-5' of histone H3 (H3Q5ser) during serotonergic neuron differentiation, thereby facilitating transcription. Acts as a mediator of neurotransmission-independent role of nuclear dopamine in ventral tegmental area (VTA) neurons: catalyzes dopaminylation of 'Gln-5' of histone H3 (H3Q5dop), thereby regulating relapse-related transcriptional plasticity in the reward system. Regulates vein remodeling by mediating serotonylation and subsequent inactivation of ATP2A2/SERCA2. Also acts as a protein deamidase by mediating the side chain deamidation of specific glutamine residues of proteins to glutamate. Catalyzes specific deamidation of protein gliadin, a component of wheat gluten in the diet. May also act as an isopeptidase cleaving the previously formed cross-links. Also able to participate in signaling pathways independently of its acyltransferase activity: acts as a signal transducer in alpha-1 adrenergic receptor-mediated stimulation of phospholipase C-delta (PLCD) activity and is required for coupling alpha-1 adrenergic agonists to the stimulation of phosphoinositide lipid metabolism. The protein is Protein-glutamine gamma-glutamyltransferase 2 of Bos taurus (Bovine).